A 135-amino-acid chain; its full sequence is UPF0225 protein CV_3559 (135 aa).

Belongs to the UPF0225 family.

The polypeptide is UPF0225 protein CV_3559 (Chromobacterium violaceum (strain ATCC 12472 / DSM 30191 / JCM 1249 / CCUG 213 / NBRC 12614 / NCIMB 9131 / NCTC 9757 / MK)).